The sequence spans 21 residues: Cyanophlyctin (21 aa).

As to expression, expressed by the skin glands.

It is found in the secreted. In terms of biological role, has antibacterial activity against E.coli HP101BA (MIC=6.4 uM), K.pneumoniae PTCC1388 (MIC=7.3 uM), M.luteus PTCC1625 (MIC=4.7 uM) and S.aureus PTCC1431 (MIC=5.3 uM). Has no or very limited (&lt;3%) hemolytic activity at concentrations of 15 ug/ml and 60 ug/ml, respectively. The sequence is that of Cyanophlyctin from Euphlyctis cyanophlyctis (Skittering frog).